Consider the following 140-residue polypeptide: L-fucose mutarotase (140 aa).

Histidine 22 (proton donor) is an active-site residue. Residues aspartate 30, arginine 107, and 129–131 each bind substrate; that span reads YGN.

This sequence belongs to the RbsD / FucU family. FucU mutarotase subfamily. In terms of assembly, homodecamer.

It is found in the cytoplasm. The enzyme catalyses alpha-L-fucose = beta-L-fucose. It functions in the pathway carbohydrate metabolism; L-fucose metabolism. Functionally, involved in the anomeric conversion of L-fucose. This is L-fucose mutarotase from Citrobacter koseri (strain ATCC BAA-895 / CDC 4225-83 / SGSC4696).